A 125-amino-acid chain; its full sequence is Small ribosomal subunit protein uS12 (125 aa).

A 3-methylthioaspartic acid modification is found at aspartate 89.

The protein belongs to the universal ribosomal protein uS12 family. Part of the 30S ribosomal subunit. Contacts proteins S8 and S17. May interact with IF1 in the 30S initiation complex.

Its function is as follows. With S4 and S5 plays an important role in translational accuracy. Functionally, interacts with and stabilizes bases of the 16S rRNA that are involved in tRNA selection in the A site and with the mRNA backbone. Located at the interface of the 30S and 50S subunits, it traverses the body of the 30S subunit contacting proteins on the other side and probably holding the rRNA structure together. The combined cluster of proteins S8, S12 and S17 appears to hold together the shoulder and platform of the 30S subunit. This is Small ribosomal subunit protein uS12 from Clostridium botulinum (strain Alaska E43 / Type E3).